The sequence spans 256 residues: Sugar fermentation stimulation protein homolog (256 aa).

The segment covering 128-141 (TGSTDTSFSGTPPT) has biased composition (low complexity). The segment at 128–149 (TGSTDTSFSGTPPTNTEPANTK) is disordered.

The protein belongs to the SfsA family.

The chain is Sugar fermentation stimulation protein homolog from Shewanella sediminis (strain HAW-EB3).